We begin with the raw amino-acid sequence, 158 residues long: 2-C-methyl-D-erythritol 2,4-cyclodiphosphate synthase (158 aa).

Residues D9 and H11 each coordinate a divalent metal cation. Residues 9–11 and 35–36 each bind 4-CDP-2-C-methyl-D-erythritol 2-phosphate; these read DVH and HS. H43 contacts a divalent metal cation. 4-CDP-2-C-methyl-D-erythritol 2-phosphate-binding positions include 57-59, 62-66, 101-107, 133-136, F140, and R143; these read DIG, FPDTD, AQKPKMA, and TTTE.

It belongs to the IspF family. Homotrimer. A divalent metal cation serves as cofactor.

The enzyme catalyses 4-CDP-2-C-methyl-D-erythritol 2-phosphate = 2-C-methyl-D-erythritol 2,4-cyclic diphosphate + CMP. The protein operates within isoprenoid biosynthesis; isopentenyl diphosphate biosynthesis via DXP pathway; isopentenyl diphosphate from 1-deoxy-D-xylulose 5-phosphate: step 4/6. In terms of biological role, involved in the biosynthesis of isopentenyl diphosphate (IPP) and dimethylallyl diphosphate (DMAPP), two major building blocks of isoprenoid compounds. Catalyzes the conversion of 4-diphosphocytidyl-2-C-methyl-D-erythritol 2-phosphate (CDP-ME2P) to 2-C-methyl-D-erythritol 2,4-cyclodiphosphate (ME-CPP) with a corresponding release of cytidine 5-monophosphate (CMP). The polypeptide is 2-C-methyl-D-erythritol 2,4-cyclodiphosphate synthase (Geobacillus sp. (strain WCH70)).